The following is a 151-amino-acid chain: Acidic phospholipase A2 4 (151 aa).

The first 27 residues, 1–27, serve as a signal peptide directing secretion; that stretch reads MYPAHLLVLLAVCVSLLGAASIPARPL. 7 disulfide bridges follow: Cys-38–Cys-104, Cys-54–Cys-151, Cys-56–Cys-72, Cys-71–Cys-132, Cys-78–Cys-125, Cys-88–Cys-118, and Cys-111–Cys-123. Ca(2+) is bound by residues Tyr-55, Gly-57, and Gly-59. His-75 is an active-site residue. Asp-76 contacts Ca(2+). Asp-126 is an active-site residue.

This sequence belongs to the phospholipase A2 family. Group I subfamily. D49 sub-subfamily. Ca(2+) serves as cofactor. As to expression, expressed by the venom gland.

It is found in the secreted. The enzyme catalyses a 1,2-diacyl-sn-glycero-3-phosphocholine + H2O = a 1-acyl-sn-glycero-3-phosphocholine + a fatty acid + H(+). PLA2 catalyzes the calcium-dependent hydrolysis of the 2-acyl groups in 3-sn-phosphoglycerides. This chain is Acidic phospholipase A2 4, found in Tropidechis carinatus (Australian rough-scaled snake).